A 213-amino-acid chain; its full sequence is Uridine kinase (213 aa).

Residue 13–20 coordinates ATP; the sequence is GASASGKS.

The protein belongs to the uridine kinase family.

The protein resides in the cytoplasm. It carries out the reaction uridine + ATP = UMP + ADP + H(+). The catalysed reaction is cytidine + ATP = CMP + ADP + H(+). Its pathway is pyrimidine metabolism; CTP biosynthesis via salvage pathway; CTP from cytidine: step 1/3. It participates in pyrimidine metabolism; UMP biosynthesis via salvage pathway; UMP from uridine: step 1/1. This chain is Uridine kinase, found in Haemophilus influenzae (strain PittEE).